A 632-amino-acid polypeptide reads, in one-letter code: 1-deoxy-D-xylulose-5-phosphate synthase (632 aa).

Thiamine diphosphate contacts are provided by residues H75 and 117-119; that span reads GHA. D146 contributes to the Mg(2+) binding site. Thiamine diphosphate contacts are provided by residues 147–148, N175, and E370; that span reads AA. Position 175 (N175) interacts with Mg(2+).

The protein belongs to the transketolase family. DXPS subfamily. As to quaternary structure, homodimer. It depends on Mg(2+) as a cofactor. Thiamine diphosphate is required as a cofactor.

It carries out the reaction D-glyceraldehyde 3-phosphate + pyruvate + H(+) = 1-deoxy-D-xylulose 5-phosphate + CO2. The protein operates within metabolic intermediate biosynthesis; 1-deoxy-D-xylulose 5-phosphate biosynthesis; 1-deoxy-D-xylulose 5-phosphate from D-glyceraldehyde 3-phosphate and pyruvate: step 1/1. In terms of biological role, catalyzes the acyloin condensation reaction between C atoms 2 and 3 of pyruvate and glyceraldehyde 3-phosphate to yield 1-deoxy-D-xylulose-5-phosphate (DXP). The sequence is that of 1-deoxy-D-xylulose-5-phosphate synthase from Chlamydia muridarum (strain MoPn / Nigg).